A 235-amino-acid chain; its full sequence is MKIIQVADQNEGGKVAVEILRSKLAEGAKTLGLATGSSPLSFYKELIESDIDLSDLVSVNLDEYVGLEADDPQSYHYFMNENLFSHKPFKKSFLPNGKAEDAEEETEDYNRILSENPVDFQILGIGTNGHIGFNEPGTSFDSQTHLVDLTPSTIEANARFFETIDQVPTQAISMGIANIMAAKSIVLFAYGKGKAQAIAGTVAGPVTEELPASVLQGHEDVTIIADAEALSLLDN.

Asp-62 acts as the Proton acceptor; for enolization step in catalysis. Residue Asn-128 is the For ring-opening step of the active site. His-130 serves as the catalytic Proton acceptor; for ring-opening step. Glu-135 serves as the catalytic For ring-opening step.

It belongs to the glucosamine/galactosamine-6-phosphate isomerase family. NagB subfamily.

The enzyme catalyses alpha-D-glucosamine 6-phosphate + H2O = beta-D-fructose 6-phosphate + NH4(+). Its pathway is amino-sugar metabolism; N-acetylneuraminate degradation; D-fructose 6-phosphate from N-acetylneuraminate: step 5/5. Functionally, catalyzes the reversible isomerization-deamination of glucosamine 6-phosphate (GlcN6P) to form fructose 6-phosphate (Fru6P) and ammonium ion. This is Glucosamine-6-phosphate deaminase from Streptococcus gordonii (strain Challis / ATCC 35105 / BCRC 15272 / CH1 / DL1 / V288).